A 614-amino-acid polypeptide reads, in one-letter code: Vitamin B12 transporter BtuB (614 aa).

An N-terminal signal peptide occupies residues 1-20 (MIKKASLLTACSVTAFSAWA). Positions 26–33 (DTLVVTAN) match the TonB box motif. Residues 38–152 (PRSTVLAPTT…IGGVVNIITT (115 aa)) enclose the TBDR plug domain. Cyanocob(III)alamin contacts are provided by residues leucine 83, serine 85, asparagine 92, and 110 to 111 (VS). A TBDR beta-barrel domain is found at 155 to 614 (HPGTEISAGW…EYTLSGSYTF (460 aa)). The next 3 membrane-spanning stretches (beta stranded) occupy residues 158-165 (TEISAGWG), 169-178 (YQNYDVSTQQ), and 184-195 (TRVTLLGDYAHT). Residues aspartate 199, glutamine 211, aspartate 213, and aspartate 215 each coordinate Ca(2+). A run of 2 beta stranded transmembrane segments spans residues 217-227 (FLSKTLYGALE) and 232-248 (DVWSGFVRGYGYDNRTN). Tyrosine 249 and aspartate 250 together coordinate Ca(2+). Alanine 251 serves as a coordination point for cyanocob(III)alamin. Aspartate 261 is a binding site for Ca(2+). Transmembrane regions (beta stranded) follow at residues 263–277 (RKLYSQSWDAGLRYN), 279–296 (ELIKSQLITSYSHSKDYN), 309–325 (TLDEMKQYTVQWANNII), 328–337 (HGNIGAGVDW), 353–369 (YDQRNTGIYLTGLQQVG), 371–381 (FTFEGAGRSDD), 385–400 (FGRHGTWQTSAGWEFI), 403–417 (YRFIASYGTSYKAPN), 434–443 (KSKQWEGAFE), 449–458 (VNWRISGYRN), 473–490 (YYNEGKARIKGVEATANF), 494–509 (PLTHTVSYDYVDARNA), 517–529 (RRAKQQVKYQLDW), and 535–550 (DWGITYQYLGTRYDKD). Residue threonine 309 coordinates cyanocob(III)alamin. Arginine 517 lines the cyanocob(III)alamin pocket. A cyanocob(III)alamin-binding site is contributed by tyrosine 551. 3 consecutive transmembrane segments (beta stranded) span residues 558-572 (TVKMGGVSLWDLAVA), 585-596 (IANLFDKDYETV), and 602-614 (AGREYTLSGSYTF). A TonB C-terminal box motif is present at residues 597–614 (YGYQTAGREYTLSGSYTF).

It belongs to the TonB-dependent receptor family. BtuB (TC 1.B.14.3.1) subfamily.

The protein localises to the cell outer membrane. In terms of biological role, involved in the active translocation of vitamin B12 (cyanocobalamin) across the outer membrane to the periplasmic space. It derives its energy for transport by interacting with the trans-periplasmic membrane protein TonB. This is Vitamin B12 transporter BtuB from Escherichia coli O1:K1 / APEC.